A 220-amino-acid polypeptide reads, in one-letter code: Small ribosomal subunit protein eS8 (220 aa).

It belongs to the eukaryotic ribosomal protein eS8 family.

The polypeptide is Small ribosomal subunit protein eS8 (RPS8A) (Leishmania major).